Reading from the N-terminus, the 463-residue chain is Alpha-L-arabinofuranosidase B (463 aa).

The first 26 residues, 1 to 26 (MIPQLNRNYAWAIALGLVARSSLVSA), serve as a signal peptide directing secretion. The interval 27 to 308 (GPCDIYASGG…ILGIGGHNSK (282 aa)) is catalytic. An intrachain disulfide couples Cys29 to Cys39. Asn81 carries N-linked (GlcNAc...) asparagine glycosylation. Intrachain disulfides connect Cys89–Cys94 and Cys184–Cys185. Residue Asp227 participates in substrate binding. Catalysis depends on Glu229, which acts as the Nucleophile. Substrate is bound at residue Asn230. N-linked (GlcNAc...) asparagine glycosylation occurs at Asn280. Gly304 is a substrate binding site. Residues 309–463 (LTVGSSISLR…VSWVVSASFA (155 aa)) are ABD. Residue Asn332 is glycosylated (N-linked (GlcNAc...) asparagine). Cys366 and Cys404 are oxidised to a cystine. His381, Asn383, Phe384, His428, Asp430, Leu433, and Asp453 together coordinate substrate.

This sequence belongs to the glycosyl hydrolase 54 family. Residue Asn-280 is mannosylated with up to 7 mannose residues.

It localises to the secreted. It catalyses the reaction Hydrolysis of terminal non-reducing alpha-L-arabinofuranoside residues in alpha-L-arabinosides.. It participates in glycan metabolism; L-arabinan degradation. In terms of biological role, secreted alpha-L-arabinofuranosidase that actively hydrolyzes p-NP-alpha-L-arabinofuranoside and is specific for furanose configuration of the carbohydrate ring. Also exhibits significant activity against polymeric arabinose-containing substrates such as arabinan and arabinoxylan, a major component of plant hemicellulose. The polypeptide is Alpha-L-arabinofuranosidase B (abfB) (Penicillium canescens).